We begin with the raw amino-acid sequence, 295 residues long: ATP synthase gamma chain (295 aa).

This sequence belongs to the ATPase gamma chain family. As to quaternary structure, F-type ATPases have 2 components, CF(1) - the catalytic core - and CF(0) - the membrane proton channel. CF(1) has five subunits: alpha(3), beta(3), gamma(1), delta(1), epsilon(1). CF(0) has three main subunits: a, b and c.

The protein resides in the cell inner membrane. Functionally, produces ATP from ADP in the presence of a proton gradient across the membrane. The gamma chain is believed to be important in regulating ATPase activity and the flow of protons through the CF(0) complex. The sequence is that of ATP synthase gamma chain from Campylobacter concisus (strain 13826).